Here is a 161-residue protein sequence, read N- to C-terminus: ATP synthase subunit b 2 (161 aa).

Residues 13-33 traverse the membrane as a helical segment; it reads IVWLVIALVAMYFVMSRLAIP.

This sequence belongs to the ATPase B chain family. F-type ATPases have 2 components, F(1) - the catalytic core - and F(0) - the membrane proton channel. F(1) has five subunits: alpha(3), beta(3), gamma(1), delta(1), epsilon(1). F(0) has three main subunits: a(1), b(2) and c(10-14). The alpha and beta chains form an alternating ring which encloses part of the gamma chain. F(1) is attached to F(0) by a central stalk formed by the gamma and epsilon chains, while a peripheral stalk is formed by the delta and b chains.

It is found in the cell inner membrane. Functionally, f(1)F(0) ATP synthase produces ATP from ADP in the presence of a proton or sodium gradient. F-type ATPases consist of two structural domains, F(1) containing the extramembraneous catalytic core and F(0) containing the membrane proton channel, linked together by a central stalk and a peripheral stalk. During catalysis, ATP synthesis in the catalytic domain of F(1) is coupled via a rotary mechanism of the central stalk subunits to proton translocation. In terms of biological role, component of the F(0) channel, it forms part of the peripheral stalk, linking F(1) to F(0). The b'-subunit is a diverged and duplicated form of b found in plants and photosynthetic bacteria. This is ATP synthase subunit b 2 (atpF2) from Rhodospirillum rubrum (strain ATCC 11170 / ATH 1.1.1 / DSM 467 / LMG 4362 / NCIMB 8255 / S1).